The chain runs to 113 residues: Small ribosomal subunit protein uS17 (113 aa).

The protein belongs to the universal ribosomal protein uS17 family. Part of the 30S ribosomal subunit.

Functionally, one of the primary rRNA binding proteins, it binds specifically to the 5'-end of 16S ribosomal RNA. This is Small ribosomal subunit protein uS17 from Pyrococcus furiosus (strain ATCC 43587 / DSM 3638 / JCM 8422 / Vc1).